The chain runs to 480 residues: Alpha-glucosidase (480 aa).

4–70 (VKIGIIGAGS…ADLKFEKTMN (67 aa)) contacts NAD(+). Aspartate 119 and asparagine 153 together coordinate substrate. A Mn(2+)-binding site is contributed by cysteine 174. Residue histidine 175 is the Proton donor of the active site. Histidine 203 is a binding site for Mn(2+). The active-site Proton acceptor is aspartate 260.

The protein belongs to the glycosyl hydrolase 4 family. In terms of assembly, homodimer. NAD(+) serves as cofactor. The cofactor is Mn(2+). Co(2+) is required as a cofactor. Requires Ni(2+) as cofactor.

It catalyses the reaction Hydrolysis of terminal, non-reducing (1-&gt;4)-linked alpha-D-glucose residues with release of alpha-D-glucose.. With respect to regulation, inhibited by Hg(2+) ion and EDTA. Its function is as follows. Alpha-glycosidase with a very broad specificity. Hydrolyzes maltose and other small maltooligosaccharides but is inactive against the polymeric substrate starch. AglA is not specific with respect to the configuration at the C-4 position of its substrates because glycosidic derivatives of D-galactose are also hydrolyzed. Does not cleave beta-glycosidic bonds. The protein is Alpha-glucosidase (aglA) of Thermotoga maritima (strain ATCC 43589 / DSM 3109 / JCM 10099 / NBRC 100826 / MSB8).